The primary structure comprises 405 residues: Aurora kinase A (405 aa).

Polar residues-rich tracts occupy residues 32–82 (VPSQ…QLQA) and 91–110 (RSLN…PGNN). A disordered region spans residues 32–127 (VPSQNPLSAN…KQKNEESKKR (96 aa)). 2 positions are modified to phosphoserine: S42 and S52. A compositionally biased stretch (basic and acidic residues) spans 111–127 (SEKELATKQKNEESKKR). In terms of domain architecture, Protein kinase spans 134–384 (FEIGRPLGKG…LKDVLEHPWI (251 aa)). Residues K144, K163, and 212 to 214 (EYA) each bind ATP. D257 serves as the catalytic Proton acceptor. A Glycyl lysine isopeptide (Lys-Gly) (interchain with G-Cter in SUMO2) cross-link involves residue K259. Residues 261–262 (EN) and D275 contribute to the ATP site. Positions 281 to 294 (HAPSSRRTTLCGTL) are activation segment. A phosphothreonine mark is found at T288 and T289. S343 bears the Phosphoserine mark. The segment at 385–405 (MANSSKPSSSQKSKDSTSKQS) is disordered. The span at 396–405 (KSKDSTSKQS) shows a compositional bias: basic and acidic residues.

Belongs to the protein kinase superfamily. Ser/Thr protein kinase family. Aurora subfamily. In terms of assembly, part of a complex composed of NEDD9, AURKA and CTTN; within the complex NEDD9 acts as a scaffold protein and is required for complex formation. Identified in a complex with AUNIP and NIN. Interacts with FBXL7. Interacts with CPEB1, JTB, TACC1, TPX2, PPP2CA, as well as with the protein phosphatase type 1 (PP1) isoforms PPP1CA, PPP1CB and PPP1CC. Also interacts with its substrates ARHGEF2, BORA, KIF2A, PARD3, and p53/TP53. Interaction with BORA promotes phosphorylation of PLK1. Interacts with CIMAP3. Interacts with GADD45A, competing with its oligomerization. Interacts (via C-terminus) with AUNIP (via C-terminus). Interacts with FRY; this interaction facilitates AURKA-mediated PLK1 phosphorylation. Interacts with SIRT2. Interacts with MYCN; interaction is phospho-independent and triggers AURKA activation; AURKA competes with FBXW7 for binding to unphosphorylated MYCN but not for binding to phosphorylated MYCN. Interacts with HNRNPU. Interacts with AAAS. Interacts with KLHL18 and CUL3. Interacts with FOXP1. Interacts with HDAC6; AURKA-mediated phosphorylation of HDAC6 promotes deacetylation of alpha-tubulin. In terms of processing, activated by phosphorylation at Thr-289; this brings about a change in the conformation of the activation segment. Phosphorylation at Thr-289 varies during the cell cycle and is highest during M phase. Autophosphorylated at Thr-289 upon TPX2 binding. Thr-289 can be phosphorylated by several kinases, including PAK and PKA. Protein phosphatase type 1 (PP1) binds AURKA and inhibits its activity by dephosphorylating Thr-289 during mitosis. Phosphorylation at Ser-343 decreases the kinase activity. PPP2CA controls degradation by dephosphorylating Ser-52 at the end of mitosis. Post-translationally, ubiquitinated by the E3 ubiquitin-protein ligase complex SCF(FBXL7) during mitosis, leading to its degradation by the proteasome. Ubiquitinated by CHFR, leading to its degradation by the proteasome. Ubiquitinated by the anaphase-promoting complex (APC), leading to its degradation by the proteasome. Ubiquitinated by the CUL3-KLHL18 ligase leading to its activation at the centrosome which is required for initiating mitotic entry. Ubiquitination mediated by CUL3-KLHL18 ligase does not lead to its degradation by the proteasome.

The protein localises to the cytoplasm. The protein resides in the cytoskeleton. It is found in the microtubule organizing center. Its subcellular location is the centrosome. It localises to the spindle pole. The protein localises to the centriole. The protein resides in the cell projection. It is found in the neuron projection. Its subcellular location is the cilium. It localises to the cilium basal body. The protein localises to the basolateral cell membrane. It catalyses the reaction L-seryl-[protein] + ATP = O-phospho-L-seryl-[protein] + ADP + H(+). The catalysed reaction is L-threonyl-[protein] + ATP = O-phospho-L-threonyl-[protein] + ADP + H(+). Its activity is regulated as follows. Activation of CDK1, appears to be an upstream event of AURKA activation. Phosphatase inhibitor-2 (PPP1R2) and TPX2 act also as activators. Inactivated by the G2 checkpoint. Inhibited by GADD45A and p53/TP53, and through dephosphorylation by protein phosphatase type 1 (PP1). MLN8054 is also a potent and selective inhibitor. Activated during the early phase of cilia disassembly in the presence of CIMAP3. Inhibited by the small molecule inhibitor VX-680. In terms of biological role, mitotic serine/threonine kinase that contributes to the regulation of cell cycle progression. Associates with the centrosome and the spindle microtubules during mitosis and plays a critical role in various mitotic events including the establishment of mitotic spindle, centrosome duplication, centrosome separation as well as maturation, chromosomal alignment, spindle assembly checkpoint, and cytokinesis. Required for normal spindle positioning during mitosis and for the localization of NUMA1 and DCTN1 to the cell cortex during metaphase. Required for initial activation of CDK1 at centrosomes. Phosphorylates numerous target proteins, including ARHGEF2, BORA, BRCA1, CDC25B, DLGP5, HDAC6, KIF2A, LATS2, NDEL1, PARD3, PPP1R2, PLK1, RASSF1, TACC3, p53/TP53 and TPX2. Phosphorylates MCRS1 which is required for MCRS1-mediated kinetochore fiber assembly and mitotic progression. Regulates KIF2A tubulin depolymerase activity. Important for microtubule formation and/or stabilization. Required for normal axon formation. Plays a role in microtubule remodeling during neurite extension. Also acts as a key regulatory component of the p53/TP53 pathway, and particularly the checkpoint-response pathways critical for oncogenic transformation of cells, by phosphorylating and destabilizing p53/TP53. Phosphorylates its own inhibitors, the protein phosphatase type 1 (PP1) isoforms, to inhibit their activity. Inhibits cilia outgrowth. Required for cilia disassembly via phosphorylation of HDAC6 and subsequent deacetylation of alpha-tubulin. Regulates protein levels of the anti-apoptosis protein BIRC5 by suppressing the expression of the SCF(FBXL7) E3 ubiquitin-protein ligase substrate adapter FBXL7 through the phosphorylation of the transcription factor FOXP1. The sequence is that of Aurora kinase A from Canis lupus familiaris (Dog).